Consider the following 808-residue polypeptide: MPDVHLSSSFAEGNTSEQNENDTFLSRIFGFHSIYNQLDNYQYYDPESQVGDSMIRRDGGSNHLLDSESDSDLSSIESSSSSQDQPPSIHANDIQMQPYEPPTQPYGEIDPQPQNAPIMTESAPSHGILNNGAVSTDEAQVQFRKTKTLPSFHTMYQRQARGRVFIPSRERALYLWANIVNMDEFLSDLYYYYRGRGVMNIVLGRIVDLATLVFVIGFASFLAWGVDYDKFLSRGQKSLTLSDLIIPHYISKAPAMAKLLLFGFAIYITLRIVQLYFDFRYKLSEIRNFYRQLLDIPHDDELMTISWATIVERLMELKDFNTLTSSSHYVNDLKSKVRLNAHDIANRIMRKENYIIALINKDTLNLGFEIPLLSVLNPILNTRAVLTRTLEWNLKLCIYNFVFNNQGQVNPNVLKDYNRNMLAKELSSRFKMAAIINLLLCPFIVVYFVLLYFFRYFNEYKTNPSSLIGLRQYTPWAEWKLREFNELPHFFVKRLQLSIGPANTYINQFPRGFLVVNIMTLVNFVAGAITAVLVVMGLWFEDEEHSFWAFELTENKSALFYISIFGTIWAVTAGSLATDTSSTESANSSSPFYYDPEASLRYVTQFTHYMPSTWSKKLHTAEVKGEFCELFSLKIVVIINELLSLVLTPFILWFKLSSQSGAIIDFVREYSVYVDGLGYVCYFAMFNFEKKDKNMMHDLNKKKKKSPSHRTKRDDIEEEEESDNGVPNGDDKMIKSYMYFLESYDDRERAARPTPKSRQLPRTRLPPGSISESTYNVDHILEEEELPQGKSAGVFGMINQFYKQDLGR.

The Cytoplasmic segment spans residues 1-205 (MPDVHLSSSF…RGVMNIVLGR (205 aa)). A disordered region spans residues 51–116 (GDSMIRRDGG…GEIDPQPQNA (66 aa)). Residues 72–89 (DLSSIESSSSSQDQPPSI) are compositionally biased toward low complexity. The chain crosses the membrane as a helical span at residues 206-226 (IVDLATLVFVIGFASFLAWGV). The Lumenal portion of the chain corresponds to 227-258 (DYDKFLSRGQKSLTLSDLIIPHYISKAPAMAK). A helical membrane pass occupies residues 259-279 (LLLFGFAIYITLRIVQLYFDF). At 280–433 (RYKLSEIRNF…KELSSRFKMA (154 aa)) the chain is on the cytoplasmic side. An intramembrane segment occupies 434 to 454 (AIINLLLCPFIVVYFVLLYFF). At 455 to 517 (RYFNEYKTNP…QFPRGFLVVN (63 aa)) the chain is on the cytoplasmic side. The chain crosses the membrane as a helical span at residues 518 to 538 (IMTLVNFVAGAITAVLVVMGL). Residues 539 to 557 (WFEDEEHSFWAFELTENKS) lie on the Lumenal side of the membrane. A helical transmembrane segment spans residues 558–578 (ALFYISIFGTIWAVTAGSLAT). Residues 579–633 (DTSSTESANSSSPFYYDPEASLRYVTQFTHYMPSTWSKKLHTAEVKGEFCELFSL) are Cytoplasmic-facing. An intramembrane segment occupies 634–654 (KIVVIINELLSLVLTPFILWF). Over 655–808 (KLSSQSGAII…NQFYKQDLGR (154 aa)) the chain is Cytoplasmic. 2 disordered regions span residues 698–732 (DLNKKKKKSPSHRTKRDDIEEEEESDNGVPNGDDK) and 748–771 (ERAARPTPKSRQLPRTRLPPGSIS). Residues 700–711 (NKKKKKSPSHRT) show a composition bias toward basic residues.

It belongs to the ATG9 family. Homotrimer; forms a homotrimer with a central pore that forms a path between the two membrane leaflets. Post-translationally, phosphorylated by ATG1. ATG1 phosphorylation is required for preautophagosome elongation.

It localises to the preautophagosomal structure membrane. It is found in the cytoplasmic vesicle membrane. The protein localises to the golgi apparatus membrane. Its subcellular location is the endoplasmic reticulum membrane. The catalysed reaction is a 1,2-diacyl-sn-glycero-3-phosphocholine(in) = a 1,2-diacyl-sn-glycero-3-phosphocholine(out). The enzyme catalyses a 1,2-diacyl-sn-glycero-3-phospho-L-serine(in) = a 1,2-diacyl-sn-glycero-3-phospho-L-serine(out). It catalyses the reaction a 1,2-diacyl-sn-glycero-3-phosphoethanolamine(in) = a 1,2-diacyl-sn-glycero-3-phosphoethanolamine(out). It carries out the reaction a 1,2-diacyl-sn-glycero-3-phospho-(1D-myo-inositol-3-phosphate)(in) = a 1,2-diacyl-sn-glycero-3-phospho-(1D-myo-inositol-3-phosphate)(out). In terms of biological role, phospholipid scramblase involved in autophagy and cytoplasm to vacuole transport (Cvt) vesicle formation. Cycles between the preautophagosomal structure/phagophore assembly site (PAS) and the cytoplasmic vesicle pool and supplies membrane for the growing autophagosome. Lipid scramblase activity plays a key role in preautophagosomal structure/phagophore assembly by distributing the phospholipids that arrive through ATG2 from the cytoplasmic to the luminal leaflet of the bilayer, thereby driving autophagosomal membrane expansion. Required for mitophagy. Also involved in endoplasmic reticulum-specific autophagic process and is essential for the survival of cells subjected to severe ER stress. Different machineries are required for anterograde trafficking to the PAS during either the Cvt pathway or bulk autophagy and for retrograde trafficking. The sequence is that of Autophagy-related protein 9 (ATG9) from Meyerozyma guilliermondii (strain ATCC 6260 / CBS 566 / DSM 6381 / JCM 1539 / NBRC 10279 / NRRL Y-324) (Yeast).